The sequence spans 159 residues: 17 kDa surface antigen (159 aa).

An N-terminal signal peptide occupies residues 1–19 (MKLLSKIMIIALAASMLQA). Cys20 is lipidated: N-palmitoyl cysteine. A lipid anchor (S-diacylglycerol cysteine) is attached at Cys20.

It belongs to the rickettsiale 17 kDa surface antigen family.

The protein resides in the cell outer membrane. In Rickettsia felis (strain ATCC VR-1525 / URRWXCal2) (Rickettsia azadi), this protein is 17 kDa surface antigen (omp).